Here is a 1259-residue protein sequence, read N- to C-terminus: Receptor tyrosine-protein kinase erbB-2 (1259 aa).

The N-terminal stretch at 1–22 (MELAAWCRWGLLLALLPSGAAG) is a signal peptide. Residues 23–653 (TQVCTGTDMK…EQRASPVTSI (631 aa)) lie on the Extracellular side of the membrane. C26 and C53 form a disulfide bridge. A glycan (N-linked (GlcNAc...) asparagine) is linked at N68. Disulfide bonds link C162–C192, C195–C204, C199–C212, C220–C227, C224–C235, C236–C244, C240–C252, C255–C264, C268–C295, C299–C311, C315–C331, C334–C338, and C342–C367. T182 is subject to Phosphothreonine. Residue N259 is glycosylated (N-linked (GlcNAc...) asparagine). N-linked (GlcNAc...) asparagine glycosylation is present at N421. Cystine bridges form between C475–C504, C511–C519, and C514–C527. N529 is a glycosylation site (N-linked (GlcNAc...) asparagine). 8 disulfide bridges follow: C530–C539, C543–C559, C562–C575, C566–C583, C586–C595, C599–C622, C625–C633, and C629–C641. N570 carries N-linked (GlcNAc...) asparagine glycosylation. A glycan (N-linked (GlcNAc...) asparagine) is linked at N628. A helical transmembrane segment spans residues 654 to 674 (IAAVVGILLAVVVGLVLGILI). Residues 675–688 (KRRRQKIRKYTMRR) form a required for interaction with KPNB1 and EEA1 region. Positions 675–688 (KRRRQKIRKYTMRR) match the Nuclear localization signal motif. The Cytoplasmic segment spans residues 675–1259 (KRRRQKIRKY…PEYLGLDVPV (585 aa)). The region spanning 719–986 (LRKVKVLGSG…RMARDPQRFV (268 aa)) is the Protein kinase domain. ATP-binding positions include 725 to 733 (LGSGAFGTV) and K752. Catalysis depends on D844, which acts as the Proton acceptor. Phosphotyrosine is present on Y876. The interval 1027 to 1183 (QGFFCPEPTP…PKTLSPGKNG (157 aa)) is disordered. Phosphoserine is present on residues S1077, S1082, and S1106. Residue Y1111 is modified to Phosphotyrosine. Residue Y1138 is modified to Phosphotyrosine; by autocatalysis. A compositionally biased stretch (pro residues) spans 1145–1160 (WPQPPLALEGPLPPSR). T1165 is subject to Phosphothreonine. Positions 1199–1201 (EYL) are interaction with PIK3C2B. Y1200 is subject to Phosphotyrosine. Residues 1203 to 1259 (PRGRAAPQPHPPPAFSPAFDNLYYWDQDPSERGSPPSTFEGTPTAENPEYLGLDVPV) form a disordered region. A compositionally biased stretch (polar residues) spans 1237 to 1247 (PPSTFEGTPTA). Phosphotyrosine; by autocatalysis is present on Y1252.

This sequence belongs to the protein kinase superfamily. Tyr protein kinase family. EGF receptor subfamily. Homodimer. Heterodimer with EGFR, ERBB3 and ERBB4. Part of a complex with EGFR and either PIK3C2A or PIK3C2B. May interact with PIK3C2B when phosphorylated on Tyr-1200. Interacts with PRKCABP and PLXNB1. Interacts (when phosphorylated on Tyr-1252) with MEMO1. Interacts with MUC1. Interacts (when phosphorylated on Tyr-1138) with GRB7 (via SH2 domain). Interacts (when phosphorylated on Tyr-1252) with ERBIN. Interacts with SRC, KPNB1, PTK6, RANBP2, EEA1, CRM1, CLTC, RPA194, MYOC and ACTB. Interacts (preferentially with the tyrosine phosphorylated form) with CPNE3; this interaction occurs at the cell membrane and is increased in a growth factor heregulin-dependent manner. Interacts with HSP90AA1 and HSP90AB1 in an ATP-dependent manner; the interaction suppresses ERBB2 kinase activity. Interacts with SORL1; this interaction regulates ERBB2 subcellular distribution by promoting its recycling after internalization from endosomes back to the plasma membrane, hence stimulates ERBB2-mediated signaling. Interacts with SH3BGRL. Interacts with ROR1. Post-translationally, autophosphorylated. Autophosphorylation occurs in trans, i.e. one subunit of the dimeric receptor phosphorylates tyrosine residues on the other subunit. Ligand-binding increases phosphorylation on tyrosine residues. Signaling via SEMA4C promotes phosphorylation at Tyr-1252. Dephosphorylated by PTPN12.

The protein localises to the cell membrane. It is found in the cell projection. The protein resides in the ruffle membrane. It localises to the early endosome. Its subcellular location is the cytoplasm. The protein localises to the perinuclear region. It is found in the nucleus. It catalyses the reaction L-tyrosyl-[protein] + ATP = O-phospho-L-tyrosyl-[protein] + ADP + H(+). Functionally, protein tyrosine kinase that is part of several cell surface receptor complexes, but that apparently needs a coreceptor for ligand binding. Essential component of a neuregulin-receptor complex, although neuregulins do not interact with it alone. GP30 is a potential ligand for this receptor. Regulates outgrowth and stabilization of peripheral microtubules (MTs). Upon ERBB2 activation, the MEMO1-RHOA-DIAPH1 signaling pathway elicits the phosphorylation and thus the inhibition of GSK3B at cell membrane. This prevents the phosphorylation of APC and CLASP2, allowing its association with the cell membrane. In turn, membrane-bound APC allows the localization of MACF1 to the cell membrane, which is required for microtubule capture and stabilization. Its function is as follows. In the nucleus is involved in transcriptional regulation. Associates with the 5'-TCAAATTC-3' sequence in the PTGS2/COX-2 promoter and activates its transcription. Implicated in transcriptional activation of CDKN1A; the function involves STAT3 and SRC. Involved in the transcription of rRNA genes by RNA Pol I and enhances protein synthesis and cell growth. The chain is Receptor tyrosine-protein kinase erbB-2 (ERBB2) from Canis lupus familiaris (Dog).